Consider the following 227-residue polypeptide: MKFAVCVFPGSNCDYDTYYVIRDILEKDVEFVYWEEKNLSKYDVVVLPGGFSFGDYLRPGALAARTPLAQAIYDFAQKGKYVIGICNGFQILTELGLLPGALLPNLNMRFVCKWVNLRVENERSAFTRKLEKGDVLRIPIAHHDGRYYVPEEELRKMEENGQILFRYCDEQGEVKEEVNPNGSVSNIAGVMNKEGNVFGMMPHPERASEDILGSHDGLMLWYSLLSD.

The region spanning 3-227 (FAVCVFPGSN…LMLWYSLLSD (225 aa)) is the Glutamine amidotransferase type-1 domain. The active-site Nucleophile is cysteine 86. Active-site residues include histidine 203 and glutamate 205.

Part of the FGAM synthase complex composed of 1 PurL, 1 PurQ and 2 PurS subunits.

It localises to the cytoplasm. The catalysed reaction is N(2)-formyl-N(1)-(5-phospho-beta-D-ribosyl)glycinamide + L-glutamine + ATP + H2O = 2-formamido-N(1)-(5-O-phospho-beta-D-ribosyl)acetamidine + L-glutamate + ADP + phosphate + H(+). The enzyme catalyses L-glutamine + H2O = L-glutamate + NH4(+). It participates in purine metabolism; IMP biosynthesis via de novo pathway; 5-amino-1-(5-phospho-D-ribosyl)imidazole from N(2)-formyl-N(1)-(5-phospho-D-ribosyl)glycinamide: step 1/2. Its function is as follows. Part of the phosphoribosylformylglycinamidine synthase complex involved in the purines biosynthetic pathway. Catalyzes the ATP-dependent conversion of formylglycinamide ribonucleotide (FGAR) and glutamine to yield formylglycinamidine ribonucleotide (FGAM) and glutamate. The FGAM synthase complex is composed of three subunits. PurQ produces an ammonia molecule by converting glutamine to glutamate. PurL transfers the ammonia molecule to FGAR to form FGAM in an ATP-dependent manner. PurS interacts with PurQ and PurL and is thought to assist in the transfer of the ammonia molecule from PurQ to PurL. The sequence is that of Phosphoribosylformylglycinamidine synthase subunit PurQ from Aquifex aeolicus (strain VF5).